We begin with the raw amino-acid sequence, 490 residues long: Bifunctional protein HldE (490 aa).

Residues 1-330 (MLDFEAVLPA…RKVLPPASLA (330 aa)) are ribokinase. 205–208 (NRKE) provides a ligand contact to ATP. Asp-275 is a catalytic residue. Residues 358–490 (FTNGCFDILH…LVARAQNGKA (133 aa)) are cytidylyltransferase.

In the N-terminal section; belongs to the carbohydrate kinase PfkB family. The protein in the C-terminal section; belongs to the cytidylyltransferase family. In terms of assembly, homodimer.

It catalyses the reaction D-glycero-beta-D-manno-heptose 7-phosphate + ATP = D-glycero-beta-D-manno-heptose 1,7-bisphosphate + ADP + H(+). The enzyme catalyses D-glycero-beta-D-manno-heptose 1-phosphate + ATP + H(+) = ADP-D-glycero-beta-D-manno-heptose + diphosphate. Its pathway is nucleotide-sugar biosynthesis; ADP-L-glycero-beta-D-manno-heptose biosynthesis; ADP-L-glycero-beta-D-manno-heptose from D-glycero-beta-D-manno-heptose 7-phosphate: step 1/4. It functions in the pathway nucleotide-sugar biosynthesis; ADP-L-glycero-beta-D-manno-heptose biosynthesis; ADP-L-glycero-beta-D-manno-heptose from D-glycero-beta-D-manno-heptose 7-phosphate: step 3/4. Functionally, catalyzes the phosphorylation of D-glycero-D-manno-heptose 7-phosphate at the C-1 position to selectively form D-glycero-beta-D-manno-heptose-1,7-bisphosphate. In terms of biological role, catalyzes the ADP transfer from ATP to D-glycero-beta-D-manno-heptose 1-phosphate, yielding ADP-D-glycero-beta-D-manno-heptose. The chain is Bifunctional protein HldE from Rhodopseudomonas palustris (strain BisB18).